The chain runs to 150 residues: Macrodomain Ter protein (150 aa).

It belongs to the MatP family. In terms of assembly, homodimer.

The protein resides in the cytoplasm. Required for spatial organization of the terminus region of the chromosome (Ter macrodomain) during the cell cycle. Prevents early segregation of duplicated Ter macrodomains during cell division. Binds specifically to matS, which is a 13 bp signature motif repeated within the Ter macrodomain. The chain is Macrodomain Ter protein from Citrobacter koseri (strain ATCC BAA-895 / CDC 4225-83 / SGSC4696).